The primary structure comprises 239 residues: Vesicle-associated protein 1-3 (239 aa).

M1 carries the N-acetylmethionine modification. Residue T2 is modified to N-acetylthreonine; in Vesicle-associated protein 1-3, N-terminally processed. The Cytoplasmic segment spans residues 2 to 215; sequence TTGDLVNIHP…RKETSKKQSG (214 aa). The 122-residue stretch at 6 to 127 folds into the MSP domain; it reads LVNIHPTELK…EDFKLRVVYI (122 aa). 2 positions are modified to phosphoserine: S133 and S164. The stretch at 179-214 forms a coiled coil; it reads SMISKLTEEKTSATQQSQKLRLELEMLRKETSKKQS. Residues 216-236 form a helical; Anchor for type IV membrane protein membrane-spanning segment; it reads GHSLLLMLLVGLLGCVIGYLL.

The protein belongs to the VAMP-associated protein (VAP) (TC 9.B.17) family.

The protein localises to the endoplasmic reticulum membrane. May play a role in vesicle trafficking. This Arabidopsis thaliana (Mouse-ear cress) protein is Vesicle-associated protein 1-3 (PVA13).